Here is a 280-residue protein sequence, read N- to C-terminus: Probable formate transporter (280 aa).

6 helical membrane passes run 33 to 49 (LSFV…LLAE), 67 to 83 (LVFG…VVIA), 116 to 133 (SWVF…VLAY), 177 to 195 (FWRA…YLAV), 204 to 219 (SFGI…CIGF), and 253 to 272 (LGNI…FTYL).

Belongs to the FNT transporter (TC 1.A.16) family.

It localises to the cell membrane. May act as a formate transporter. The chain is Probable formate transporter (fdhC) from Methanobacterium formicicum.